The chain runs to 316 residues: METWQELKVTVKREGEELVSNLLIELGAQGVAIEDSMDYVGNVDRFGEIFPEVEQQEEIVVTAYYPDTVDVTVVEADLQARLAELTDFMDLGELKIGTTALAEEDWADNWKKYYEPARITHDLTIVPSWTDYEATAGEMIIKLDPGMAFGTGTHPTTKMSLFALEQVLRGGETVLDVGTGSGVLSIASSLLGAKEIFAYDLDDVAVRVAQENIELNPGMENIHVAAGDLLKGVEIEADVIVANILADILIHLIDDAYRLVKDEGYLIMSGIIKDKLDMVRQSAESAGFFLETHMVQGEWNTCVFKKTKDISGVIGG.

S-adenosyl-L-methionine contacts are provided by Thr157, Gly178, Asp200, and Asn243.

This sequence belongs to the methyltransferase superfamily. PrmA family.

The protein localises to the cytoplasm. The enzyme catalyses L-lysyl-[protein] + 3 S-adenosyl-L-methionine = N(6),N(6),N(6)-trimethyl-L-lysyl-[protein] + 3 S-adenosyl-L-homocysteine + 3 H(+). Methylates ribosomal protein L11. This Streptococcus pneumoniae serotype 4 (strain ATCC BAA-334 / TIGR4) protein is Ribosomal protein L11 methyltransferase.